A 346-amino-acid chain; its full sequence is Dimethylallyltranstransferase (346 aa).

The isopentenyl diphosphate site is built by Lys-96, Arg-99, and His-128. Mg(2+)-binding residues include Asp-135 and Asp-141. Arg-147 serves as a coordination point for isopentenyl diphosphate.

It belongs to the FPP/GGPP synthase family. The cofactor is Mg(2+).

It catalyses the reaction isopentenyl diphosphate + dimethylallyl diphosphate = (2E)-geranyl diphosphate + diphosphate. It functions in the pathway isoprenoid biosynthesis; geranyl diphosphate biosynthesis; geranyl diphosphate from dimethylallyl diphosphate and isopentenyl diphosphate: step 1/1. Prenyltransferase involved in the biosynthesis of ambiguines, a family of hapalindole-type alkaloids. Catalyzes the addition of isopentenyl diphosphate (IPP) onto dimethylallyl diphosphate (DMAPP) to form geranyl pyrophosphate (GPP). Cannot use farnesyl diphosphate (FPP) or geranylgeranyl diphosphate (GGPP). The protein is Dimethylallyltranstransferase of Fischerella ambigua (strain UTEX 1903).